We begin with the raw amino-acid sequence, 529 residues long: F-box/LRR-repeat protein At5g63520 (529 aa).

The disordered stretch occupies residues 1 to 22 (MAEVSLTKKEMTTKGKSENSKK). The region spanning 31–78 (VPIAAMNEDLLHNILLRLPAKSFAFASCVNRFWSSVCNRILSRPKMIS) is the F-box domain. LRR repeat units follow at residues 265 to 288 (GNEPRNVQLQKDDIRVLAGLIFAR) and 418 to 441 (QVYLPDLKVAEAALNDVSAQLRNL).

This Arabidopsis thaliana (Mouse-ear cress) protein is F-box/LRR-repeat protein At5g63520.